The following is a 222-amino-acid chain: Triosephosphate isomerase (222 aa).

9–11 (NFK) contacts substrate. H93 serves as the catalytic Electrophile. The active-site Proton acceptor is E141. Substrate-binding positions include I146, G181, and 202-203 (AS).

This sequence belongs to the triosephosphate isomerase family. As to quaternary structure, homotetramer; dimer of dimers.

The protein resides in the cytoplasm. It catalyses the reaction D-glyceraldehyde 3-phosphate = dihydroxyacetone phosphate. The protein operates within carbohydrate biosynthesis; gluconeogenesis. It participates in carbohydrate degradation; glycolysis; D-glyceraldehyde 3-phosphate from glycerone phosphate: step 1/1. Its function is as follows. Involved in the gluconeogenesis. Catalyzes stereospecifically the conversion of dihydroxyacetone phosphate (DHAP) to D-glyceraldehyde-3-phosphate (G3P). The polypeptide is Triosephosphate isomerase (Methanothermus fervidus (strain ATCC 43054 / DSM 2088 / JCM 10308 / V24 S)).